The sequence spans 416 residues: RNA polymerase sigma-C factor (416 aa).

Residues 205 to 218 (DLVQEGTLGLERAV) carry the Polymerase core binding motif. Residues 374 to 393 (LAEIGRALDLSRERVRQIES) constitute a DNA-binding region (H-T-H motif).

The protein belongs to the sigma-70 factor family.

Functionally, sigma factors are initiation factors that promote the attachment of RNA polymerase to specific initiation sites and are then released. The protein is RNA polymerase sigma-C factor (sigC) of Nostoc sp. (strain PCC 7120 / SAG 25.82 / UTEX 2576).